The primary structure comprises 172 residues: DCC family protein At1g52590, chloroplastic (172 aa).

Residues 1 to 25 constitute a chloroplast transit peptide; it reads MAILIPASFGRLTITSRAQVRVRVS.

It belongs to the DCC thiol-disulfide oxidoreductase family.

It is found in the plastid. The protein localises to the chloroplast. In Arabidopsis thaliana (Mouse-ear cress), this protein is DCC family protein At1g52590, chloroplastic.